We begin with the raw amino-acid sequence, 424 residues long: Glutamate-1-semialdehyde 2,1-aminomutase (424 aa).

Lys-266 is subject to N6-(pyridoxal phosphate)lysine.

It belongs to the class-III pyridoxal-phosphate-dependent aminotransferase family. HemL subfamily. As to quaternary structure, homodimer. The cofactor is pyridoxal 5'-phosphate.

Its subcellular location is the cytoplasm. It catalyses the reaction (S)-4-amino-5-oxopentanoate = 5-aminolevulinate. Its pathway is porphyrin-containing compound metabolism; protoporphyrin-IX biosynthesis; 5-aminolevulinate from L-glutamyl-tRNA(Glu): step 2/2. In Azoarcus sp. (strain BH72), this protein is Glutamate-1-semialdehyde 2,1-aminomutase.